A 919-amino-acid chain; its full sequence is Chaperone protein ClpC2, chloroplastic (919 aa).

The transit peptide at 1–54 (MAGTLLQPVALGTTFAGRVSGQRWKSHGTRRPPSMLAMSLSRPVKMAAFVGLRS) directs the protein to the chloroplast. The Clp R domain occupies 89-231 (FERFTEKAIK…RTQVIRMIGE (143 aa)). Repeat regions lie at residues 92–157 (FTEK…IGRG) and 167–231 (FTPR…MIGE). The interval 252 to 499 (LEEYGTNLTK…RVRLRHAQVP (248 aa)) is i. An ATP-binding site is contributed by 297–304 (GEPGVGKT). The 36-residue stretch at 506-541 (DKELKQITKDKNEAVRSQDFEKAGELRDREMELKAQ) folds into the UVR domain. Residues 566-757 (VNEADIQHIV…LLIMTSNVGS (192 aa)) are II. 640-647 (GPTGVGKS) contributes to the ATP binding site.

The protein belongs to the ClpA/ClpB family. ClpC subfamily.

It localises to the plastid. The protein resides in the chloroplast. In terms of biological role, molecular chaperone that may interact with a ClpP-like protease involved in degradation of denatured proteins in the chloroplast. The chain is Chaperone protein ClpC2, chloroplastic (CLPC2) from Oryza sativa subsp. japonica (Rice).